Reading from the N-terminus, the 769-residue chain is Integrin beta-2 (769 aa).

The first 22 residues, 1 to 22 (MLCRCSPLLLLVGLLTLRSALS), serve as a signal peptide directing secretion. Gln23 carries the pyrrolidone carboxylic acid modification. Over 23–700 (QECAKYKVST…ETRECVKGPN (678 aa)) the chain is Extracellular. Residues 24 to 74 (ECAKYKVSTCRDCIESGPGCAWCQKLNFSGQGEPDSVRCDTREQLLAKGCV) enclose the PSI domain. Disulfide bonds link Cys25–Cys43, Cys33–Cys447, Cys36–Cys62, Cys46–Cys73, Cys191–Cys198, Cys246–Cys286, Cys386–Cys400, Cys420–Cys445, Cys449–Cys467, Cys459–Cys470, Cys472–Cys481, Cys483–Cys514, Cys497–Cys512, Cys506–Cys517, Cys519–Cys534, Cys536–Cys559, Cys541–Cys557, Cys549–Cys562, Cys564–Cys573, Cys575–Cys598, Cys582–Cys596, Cys590–Cys601, Cys603–Cys612, Cys615–Cys618, Cys622–Cys662, Cys628–Cys647, Cys631–Cys643, and Cys670–Cys695. N-linked (GlcNAc...) asparagine glycans are attached at residues Asn50 and Asn116. The 240-residue stretch at 124 to 363 (GYPIDLYYLM…ELIKNAYNKL (240 aa)) folds into the VWFA domain. Residues Ser136 and Ser138 each contribute to the Mg(2+) site. Ca(2+) contacts are provided by Ser138, Asp141, Asp142, and Asp173. Residues Asn229, Asp231, Pro233, and Glu234 each coordinate Ca(2+). Position 234 (Glu234) interacts with Mg(2+). The N-linked (GlcNAc...) asparagine glycan is linked to Asn254. Ca(2+)-binding residues include Asp264 and Glu347. The Cell attachment site motif lies at 397-399 (RGD). I-EGF domains follow at residues 449–482 (CGDS…KHCE), 483–535 (CQTQ…QFCE), 536–574 (CDNM…SACQ), and 575–613 (CLKS…PLCT). N-linked (GlcNAc...) asparagine glycosylation occurs at Asn501. An N-linked (GlcNAc...) asparagine glycan is attached at Asn642. Residues 701-723 (IAAIVGGTVGGVVLVGIFLLVIW) traverse the membrane as a helical segment. Residues 724-769 (KVLTHLSDLREYKRFEKEKLKSQWNNDNPLFKSATTTVMNPKFAER) are Cytoplasmic-facing. Ser745 and Ser756 each carry phosphoserine. Phosphothreonine occurs at positions 758 and 760.

The protein belongs to the integrin beta chain family. In terms of assembly, heterodimer of an alpha and a beta subunit. The ITGB2 beta subunit associates with the ITGAL, ITGAM, ITGAX or ITGAD alpha subunits. Found in a complex with CD177 and ITGAM/CD11b. Interacts with FGR. Interacts with COPS5 and RANBP9. Interacts with FLNA (via filamin repeats 4, 9, 12, 17, 19, 21, and 23). Interacts with THBD. Both Ser-745 and Ser-756 become phosphorylated when T-cells are exposed to phorbol esters. Phosphorylation on Thr-758 (but not on Ser-756) allows interaction with 14-3-3 proteins.

The protein localises to the cell membrane. Its subcellular location is the membrane raft. Integrin ITGAL/ITGB2 is a receptor for ICAM1, ICAM2, ICAM3 and ICAM4. Integrin ITGAL/ITGB2 is also a receptor for the secreted form of ubiquitin-like protein ISG15; the interaction is mediated by ITGAL. Integrins ITGAM/ITGB2 and ITGAX/ITGB2 are receptors for the iC3b fragment of the third complement component and for fibrinogen. Integrin ITGAX/ITGB2 recognizes the sequence G-P-R in fibrinogen alpha-chain. Integrin ITGAM/ITGB2 recognizes P1 and P2 peptides of fibrinogen gamma chain. Integrin ITGAM/ITGB2 is also a receptor for factor X. Integrin ITGAD/ITGB2 is a receptor for ICAM3 and VCAM1. Contributes to natural killer cell cytotoxicity. Involved in leukocyte adhesion and transmigration of leukocytes including T-cells and neutrophils. Triggers neutrophil transmigration during lung injury through PTK2B/PYK2-mediated activation. Integrin alpha-L/beta-2 in association with ICAM3, contributes to apoptotic neutrophil phagocytosis by macrophages. The sequence is that of Integrin beta-2 (ITGB2) from Sus scrofa (Pig).